The chain runs to 603 residues: Probable HECT-type ubiquitin ligase-interacting protein creD (603 aa).

Disordered stretches follow at residues 375 to 398 and 432 to 499; these read ELDP…GTLS and LNIT…MATP. Over residues 443 to 455 the composition is skewed to basic and acidic residues; that stretch reads TDHESQNDSEHRR. Over residues 465–481 the composition is skewed to low complexity; sequence PSSGSNSHSPSSPVLSR. The segment covering 482–492 has biased composition (basic and acidic residues); it reads RPSDEVDHEHV.

Belongs to the arrestin family. As to quaternary structure, interacts with hulA.

Functionally, component of the regulatory network controlling carbon source utilization through ubiquitination and deubiquitination involving creA, creB, creC, creD and acrB. May be involved in signaling by recognizing appropriately phosphorylated substrates via its arrestin domains and then recruit a HECT-type ubiquitin ligase such as hulA, leading to ubiquitination of the substrate, providing a link between ubiquitination and phosphorylation in protein regulation and stability. The chain is Probable HECT-type ubiquitin ligase-interacting protein creD (creD) from Aspergillus flavus (strain ATCC 200026 / FGSC A1120 / IAM 13836 / NRRL 3357 / JCM 12722 / SRRC 167).